The primary structure comprises 847 residues: Receptor-like protein 12 (847 aa).

Positions 1–27 (MMIRSHRHWVFSSRIIIFLSLLVHSLA) are cleaved as a signal peptide. At 28-798 (SSSPHFCRDD…LSEAEENMFN (771 aa)) the chain is on the extracellular side. 4 N-linked (GlcNAc...) asparagine glycosylation sites follow: Asn52, Asn66, Asn103, and Asn132. LRR repeat units lie at residues 109-133 (LQYL…LGNL), 135-157 (HLTL…IGNL), 158-181 (NQLR…LGNL), 183-205 (RLVN…IGDL), 206-229 (KQLR…LGNL), 231-253 (NLVH…IGNL), 254-277 (IELR…FANL), 279-301 (KLSI…MSIF), 302-325 (HNLE…LLLI), 326-350 (PSLE…TSSS), 351-374 (TKLQ…ISRL), 375-398 (LNLE…ISKL), 400-422 (NLLH…LWRL), 424-442 (TMVL…SQEE), 443-466 (ALIE…ICKL), 467-491 (SSLG…RNFS), 492-514 (GSIK…IFSK), 516-539 (TELV…LINC), 541-562 (ALEL…WLES), 563-587 (LPSL…HASI), 589-613 (FQSL…YFSN), 657-681 (RRDF…LGYL), 682-704 (KELR…FLAN), 705-729 (LTKL…LAAL), and 731-754 (FLSY…QFQR). Asn180 carries an N-linked (GlcNAc...) asparagine glycan. Asn210 and Asn228 each carry an N-linked (GlcNAc...) asparagine glycan. N-linked (GlcNAc...) asparagine glycans are attached at residues Asn263, Asn276, and Asn289. N-linked (GlcNAc...) asparagine glycosylation occurs at Asn346. The N-linked (GlcNAc...) asparagine glycan is linked to Asn386. N-linked (GlcNAc...) asparagine glycosylation occurs at Asn437. N-linked (GlcNAc...) asparagine glycans are attached at residues Asn489 and Asn503. The N-linked (GlcNAc...) asparagine glycan is linked to Asn601. N-linked (GlcNAc...) asparagine glycosylation is found at Asn688 and Asn704. The N-linked (GlcNAc...) asparagine glycan is linked to Asn736. The helical transmembrane segment at 799–819 (WVAAAIAYGPGVLCGLVIGHF) threads the bilayer. Topologically, residues 820–847 (YTSHNHEWFTEKFGRKQHKALTSVKCSL) are cytoplasmic.

This sequence belongs to the RLP family.

The protein localises to the cell membrane. Involved in the perception of CLV3 and CLV3-like peptides, that act as extracellular signals regulating meristems maintenance. In Arabidopsis thaliana (Mouse-ear cress), this protein is Receptor-like protein 12.